The primary structure comprises 211 residues: RNA chaperone ProQ (211 aa).

Residues 112-148 (ERRAVEKANNPKANKKRSVHHSGNKSENKKSAGKKFS) form a disordered region. A compositionally biased stretch (basic residues) spans 124-134 (ANKKRSVHHSG).

Belongs to the ProQ family.

Its subcellular location is the cytoplasm. In terms of biological role, RNA chaperone with significant RNA binding, RNA strand exchange and RNA duplexing activities. This Histophilus somni (strain 2336) (Haemophilus somnus) protein is RNA chaperone ProQ.